The primary structure comprises 514 residues: 2,3-bisphosphoglycerate-independent phosphoglycerate mutase (514 aa).

Positions 14 and 64 each coordinate Mn(2+). Ser64 acts as the Phosphoserine intermediate in catalysis. Substrate contacts are provided by residues His125, 155–156, Arg187, Arg193, 263–266, and Lys336; these read RD and RADR. Residues Asp403, His407, Asp444, His445, and His463 each contribute to the Mn(2+) site.

This sequence belongs to the BPG-independent phosphoglycerate mutase family. Monomer. Mn(2+) is required as a cofactor.

The catalysed reaction is (2R)-2-phosphoglycerate = (2R)-3-phosphoglycerate. It functions in the pathway carbohydrate degradation; glycolysis; pyruvate from D-glyceraldehyde 3-phosphate: step 3/5. Functionally, catalyzes the interconversion of 2-phosphoglycerate and 3-phosphoglycerate. In Shewanella sp. (strain ANA-3), this protein is 2,3-bisphosphoglycerate-independent phosphoglycerate mutase.